The primary structure comprises 582 residues: Hemagglutinin-neuraminidase (582 aa).

The Intravirion portion of the chain corresponds to 1–34; that stretch reads MEPSKLFTISDNATFAPGPVNNAADKKTFRTCFR. A helical; Signal-anchor for type II membrane protein membrane pass occupies residues 35 to 55; the sequence is ILVLSVQAVTLILVIVTLGEL. Residues 56 to 582 are Virion surface-facing; the sequence is VRMINDQGLS…LPVLTRLTIT (527 aa). Residue Asn127 is glycosylated (N-linked (GlcNAc...) asparagine; by host). Disulfide bonds link Cys178–Cys202, Cys192–Cys253, and Cys244–Cys257. The segment at 240–245 is involved in neuraminidase activity; it reads NRKSCS. N-linked (GlcNAc...) asparagine; by host glycosylation is found at Asn284 and Asn329. 3 cysteine pairs are disulfide-bonded: Cys350–Cys471, Cys382–Cys392, and Cys465–Cys475. Residues Asn400 and Asn448 are each glycosylated (N-linked (GlcNAc...) asparagine; by host). A glycan (N-linked (GlcNAc...) asparagine; by host) is linked at Asn507. A disulfide bridge links Cys545 with Cys556.

This sequence belongs to the paramyxoviruses hemagglutinin-neuraminidase family. Homotetramer; composed of disulfide-linked homodimers. Interacts with F protein trimer.

The protein localises to the virion membrane. It is found in the host cell membrane. The catalysed reaction is Hydrolysis of alpha-(2-&gt;3)-, alpha-(2-&gt;6)-, alpha-(2-&gt;8)- glycosidic linkages of terminal sialic acid residues in oligosaccharides, glycoproteins, glycolipids, colominic acid and synthetic substrates.. Attaches the virus to alpha-2,3-linked sialic acid-containing cell receptors and thereby initiating infection. Binding of HN protein to the receptor induces a conformational change that allows the F protein to trigger virion/cell membranes fusion. Binds to the glycan motifs sialyl Lewis (SLe) and GM2 ganglioside (GM2-glycan). Functionally, neuraminidase activity ensures the efficient spread of the virus by dissociating the mature virions from the neuraminic acid containing glycoproteins. This chain is Hemagglutinin-neuraminidase (HN), found in Mumps virus (strain RW) (MuV).